A 108-amino-acid chain; its full sequence is Class I hydrophobin hgfII (108 aa).

The first 19 residues, 1 to 19 (MFSRIAAVSFLALPLLAAA), serve as a signal peptide directing secretion. 4 disulfides stabilise this stretch: cysteine 28-cysteine 89, cysteine 35-cysteine 83, cysteine 36-cysteine 69, and cysteine 90-cysteine 103. N-linked (GlcNAc...) asparagine glycosylation occurs at asparagine 92.

The protein belongs to the fungal hydrophobin family. In terms of assembly, self-assembles to form functional amyloid fibrils called rodlets with a diameter of 15-30 nm. Self-assembly into fibrillar rodlets occurs spontaneously at hydrophobic:hydrophilic interfaces and the rodlets further associate laterally to form amphipathic monolayers. In terms of tissue distribution, highky expressed in hyphae cultured in liquid medium.

It is found in the secreted. It localises to the cell wall. Its function is as follows. Aerial growth, conidiation, and dispersal of filamentous fungi in the environment rely upon a capability of their secreting small amphipathic proteins called hydrophobins (HPBs) with low sequence identity. Class I can self-assemble into an outermost layer of rodlet bundles on aerial cell surfaces, conferring cellular hydrophobicity that supports fungal growth, development and dispersal; whereas Class II form highly ordered films at water-air interfaces through intermolecular interactions but contribute nothing to the rodlet structure. HgfII is a class I hydrophobin that is involved in cell surface hydrophobicity and might play a key role during the growth and development of hyphae cultured in liquid medium. The protein is Class I hydrophobin hgfII of Grifola frondosa (Maitake).